A 380-amino-acid chain; its full sequence is MAKKDYYDTLGVPKNASDDDIKKAYRKLAMKHHPDRNQGDKSKVSEEKFKEAKEAYEVLSDENKRMAYDQYGHAGVDPNMRGGGPGAEGFGGFAEAFGDIFGDVFGGQRGGQQRGGRQVYRGGDLSYAMEITLEEAAHGKEAQIRIPSWDDCNTCHGSGAKPGTKVVTCTTCHGHGVVQMRQGFFSVQQTCPQCKGTGKLIPEPCVACHGVGKTKNNKTLEVKIPAGIDDGMRIRSTGNGEPGTNGGPPGDLYIEIRIKKHEIFERDGDDLHCAVPISFTTAALGGEIEVPTLAGKAAIDIPEGTQAAKQFRLRGKGIKGVRSSYPGDLYCHITVETPVKLTEHQRKLLKELDESLKKGGARHSPSEEGWADKLKSFFSA.

Residues 1–48 (MAKKDYYDTLGVPKNASDDDIKKAYRKLAMKHHPDRNQGDKSKVSEEK) form a disordered region. Residues 5–72 (DYYDTLGVPK…NKRMAYDQYG (68 aa)) form the J domain. Basic residues predominate over residues 24-34 (AYRKLAMKHHP). A compositionally biased stretch (basic and acidic residues) spans 35-48 (DRNQGDKSKVSEEK). A CR-type zinc finger spans residues 139 to 217 (GKEAQIRIPS…CHGVGKTKNN (79 aa)). Zn(2+)-binding residues include Cys152, Cys155, Cys169, Cys172, Cys191, Cys194, Cys205, and Cys208. 4 CXXCXGXG motif repeats span residues 152–159 (CNTCHGSG), 169–176 (CTTCHGHG), 191–198 (CPQCKGTG), and 205–212 (CVACHGVG). The interval 357-380 (KKGGARHSPSEEGWADKLKSFFSA) is disordered. The span at 364–380 (SPSEEGWADKLKSFFSA) shows a compositional bias: basic and acidic residues.

This sequence belongs to the DnaJ family. As to quaternary structure, homodimer. Zn(2+) is required as a cofactor.

It localises to the cytoplasm. In terms of biological role, participates actively in the response to hyperosmotic and heat shock by preventing the aggregation of stress-denatured proteins and by disaggregating proteins, also in an autonomous, DnaK-independent fashion. Unfolded proteins bind initially to DnaJ; upon interaction with the DnaJ-bound protein, DnaK hydrolyzes its bound ATP, resulting in the formation of a stable complex. GrpE releases ADP from DnaK; ATP binding to DnaK triggers the release of the substrate protein, thus completing the reaction cycle. Several rounds of ATP-dependent interactions between DnaJ, DnaK and GrpE are required for fully efficient folding. Also involved, together with DnaK and GrpE, in the DNA replication of plasmids through activation of initiation proteins. This is Chaperone protein DnaJ from Polaromonas sp. (strain JS666 / ATCC BAA-500).